The following is a 191-amino-acid chain: Protein YceI (191 aa).

The N-terminal stretch at 1–22 (MKKNLLGFTFASLLFTTGSAVA) is a signal peptide.

The protein belongs to the UPF0312 family. Type 1 subfamily.

The protein localises to the periplasm. This Salmonella agona (strain SL483) protein is Protein YceI.